We begin with the raw amino-acid sequence, 339 residues long: Centromere protein N (339 aa).

Residues Ser226 and Ser235 each carry the phosphoserine modification.

Belongs to the CENP-N/CHL4 family. In terms of assembly, component of the CENPA-NAC complex, at least composed of CENPA, CENPC, CENPH, CENPM, CENPN, CENPT and CENPU. The CENPA-NAC complex interacts with the CENPA-CAD complex, composed of CENPI, CENPK, CENPL, CENPO, CENPP, CENPQ, CENPR and CENPS. Interacts directly with CENPA. Identified in a centromere complex containing histones H2A, H2B and H4, and at least CENPA, CENPB, CENPC, CENPT, CENPN, HJURP, SUPT16H, SSRP1 and RSF1.

It is found in the nucleus. The protein resides in the chromosome. Its subcellular location is the centromere. The protein localises to the kinetochore. In terms of biological role, component of the CENPA-NAC (nucleosome-associated) complex, a complex that plays a central role in assembly of kinetochore proteins, mitotic progression and chromosome segregation. The CENPA-NAC complex recruits the CENPA-CAD (nucleosome distal) complex and may be involved in incorporation of newly synthesized CENPA into centromeres. CENPN is the first protein to bind specifically to CENPA nucleosomes and the direct binding of CENPA nucleosomes by CENPN is required for centromere assembly. Required for chromosome congression and efficiently align the chromosomes on a metaphase plate. The chain is Centromere protein N (CENPN) from Bos taurus (Bovine).